The sequence spans 993 residues: uncharacterized protein (993 aa).

The first 28 residues, 1–28 (MKLFPRSILITLVLSFALNLGIVTKIHA), serve as a signal peptide directing secretion. A run of 7 helical transmembrane segments spans residues 331–351 (IVTA…LLAG), 359–379 (YINF…INIT), 392–412 (MIQW…SWVM), 494–514 (MLVS…AFMV), 521–541 (MISI…FLFA), 554–574 (MISF…MFSV), and 699–719 (IKNI…MYNF). The tract at residues 779–904 (GQGGGASDLE…EKVDSTSKGT (126 aa)) is disordered. Positions 805 to 829 (TSAPAVTTPTASSSVASSSPKTVSS) are enriched in low complexity. The segment covering 838-850 (PPAPTEAVSPPPA) has biased composition (pro residues). Positions 866–879 (IIRDNNQESKKEID) are enriched in basic and acidic residues.

Belongs to the TrbL/VirB6 family.

The protein localises to the cell membrane. This is an uncharacterized protein from Rickettsia conorii (strain ATCC VR-613 / Malish 7).